The sequence spans 206 residues: ATP synthase subunit b (206 aa).

Residues leucine 10–leucine 30 form a helical membrane-spanning segment.

Belongs to the ATPase B chain family. As to quaternary structure, F-type ATPases have 2 components, F(1) - the catalytic core - and F(0) - the membrane proton channel. F(1) has five subunits: alpha(3), beta(3), gamma(1), delta(1), epsilon(1). F(0) has three main subunits: a(1), b(2) and c(10-14). The alpha and beta chains form an alternating ring which encloses part of the gamma chain. F(1) is attached to F(0) by a central stalk formed by the gamma and epsilon chains, while a peripheral stalk is formed by the delta and b chains.

Its subcellular location is the cell inner membrane. Functionally, f(1)F(0) ATP synthase produces ATP from ADP in the presence of a proton or sodium gradient. F-type ATPases consist of two structural domains, F(1) containing the extramembraneous catalytic core and F(0) containing the membrane proton channel, linked together by a central stalk and a peripheral stalk. During catalysis, ATP synthesis in the catalytic domain of F(1) is coupled via a rotary mechanism of the central stalk subunits to proton translocation. In terms of biological role, component of the F(0) channel, it forms part of the peripheral stalk, linking F(1) to F(0). This is ATP synthase subunit b from Geobacter sulfurreducens (strain ATCC 51573 / DSM 12127 / PCA).